Consider the following 200-residue polypeptide: GTP cyclohydrolase-2 (200 aa).

Residue 50–54 coordinates GTP; that stretch reads RVHSE. 3 residues coordinate Zn(2+): Cys-55, Cys-66, and Cys-68. Residues Gln-71, 93-95, and Thr-115 each bind GTP; that span reads EGR. Asp-127 acts as the Proton acceptor in catalysis. The active-site Nucleophile is Arg-129. Thr-150 and Lys-155 together coordinate GTP.

The protein belongs to the GTP cyclohydrolase II family. Zn(2+) is required as a cofactor.

It carries out the reaction GTP + 4 H2O = 2,5-diamino-6-hydroxy-4-(5-phosphoribosylamino)-pyrimidine + formate + 2 phosphate + 3 H(+). Its pathway is cofactor biosynthesis; riboflavin biosynthesis; 5-amino-6-(D-ribitylamino)uracil from GTP: step 1/4. Catalyzes the conversion of GTP to 2,5-diamino-6-ribosylamino-4(3H)-pyrimidinone 5'-phosphate (DARP), formate and pyrophosphate. This chain is GTP cyclohydrolase-2, found in Acinetobacter baumannii (strain AB307-0294).